The sequence spans 535 residues: Bifunctional purine biosynthesis protein PurH (535 aa).

Residues 6 to 151 (TRLPIRRALI…KNHKDVAIVV (146 aa)) form the MGS-like domain.

It belongs to the PurH family.

The enzyme catalyses (6R)-10-formyltetrahydrofolate + 5-amino-1-(5-phospho-beta-D-ribosyl)imidazole-4-carboxamide = 5-formamido-1-(5-phospho-D-ribosyl)imidazole-4-carboxamide + (6S)-5,6,7,8-tetrahydrofolate. It carries out the reaction IMP + H2O = 5-formamido-1-(5-phospho-D-ribosyl)imidazole-4-carboxamide. It participates in purine metabolism; IMP biosynthesis via de novo pathway; 5-formamido-1-(5-phospho-D-ribosyl)imidazole-4-carboxamide from 5-amino-1-(5-phospho-D-ribosyl)imidazole-4-carboxamide (10-formyl THF route): step 1/1. The protein operates within purine metabolism; IMP biosynthesis via de novo pathway; IMP from 5-formamido-1-(5-phospho-D-ribosyl)imidazole-4-carboxamide: step 1/1. This Pseudomonas fluorescens (strain ATCC BAA-477 / NRRL B-23932 / Pf-5) protein is Bifunctional purine biosynthesis protein PurH.